The chain runs to 149 residues: D-aminoacyl-tRNA deacylase (149 aa).

The Gly-cisPro motif, important for rejection of L-amino acids motif lies at 137–138; sequence GP.

It belongs to the DTD family. As to quaternary structure, homodimer.

It is found in the cytoplasm. The catalysed reaction is glycyl-tRNA(Ala) + H2O = tRNA(Ala) + glycine + H(+). It carries out the reaction a D-aminoacyl-tRNA + H2O = a tRNA + a D-alpha-amino acid + H(+). In terms of biological role, an aminoacyl-tRNA editing enzyme that deacylates mischarged D-aminoacyl-tRNAs. Also deacylates mischarged glycyl-tRNA(Ala), protecting cells against glycine mischarging by AlaRS. Acts via tRNA-based rather than protein-based catalysis; rejects L-amino acids rather than detecting D-amino acids in the active site. By recycling D-aminoacyl-tRNA to D-amino acids and free tRNA molecules, this enzyme counteracts the toxicity associated with the formation of D-aminoacyl-tRNA entities in vivo and helps enforce protein L-homochirality. The chain is D-aminoacyl-tRNA deacylase from Caldicellulosiruptor bescii (strain ATCC BAA-1888 / DSM 6725 / KCTC 15123 / Z-1320) (Anaerocellum thermophilum).